The sequence spans 673 residues: Poly(glycerol-phosphate) alpha-glucosyltransferase (673 aa).

Ser-2 carries the phosphoserine modification.

This sequence belongs to the glycosyltransferase group 1 family. Glycosyltransferase 4 subfamily.

It localises to the cytoplasm. The catalysed reaction is 4-O-{[(2R)-1-glycerylphospho](n)-(2R)-1-glycerylphospho}-N-acetyl-beta-D-mannosaminyl-(1-&gt;4)-N-acetyl-alpha-D-glucosaminyl undecaprenyl diphosphate + n UDP-alpha-D-glucose = 4-O-{[(2R)-2-alpha-D-glucosyl-1-glycerylphospho](n)-(2R)-1-glycerylphospho}-N-acetyl-beta-D-mannosaminyl-(1-&gt;4)-N-acetyl-alpha-D-glucosaminyl undecaprenyl diphosphate + n UDP + n H(+). Its pathway is cell wall biogenesis; poly(glycerol phosphate) teichoic acid biosynthesis. Catalyzes the addition of glucose to the C-2 hydroxy group of the glycerol units in teichoic acid. In Bacillus subtilis (strain 168), this protein is Poly(glycerol-phosphate) alpha-glucosyltransferase (tagE).